Here is a 515-residue protein sequence, read N- to C-terminus: 2,3-bisphosphoglycerate-independent phosphoglycerate mutase (515 aa).

Mn(2+)-binding residues include aspartate 14 and serine 63. Serine 63 is a catalytic residue. Residues histidine 124, 154-155 (RD), arginine 186, arginine 192, 259-262 (RADR), and lysine 334 each bind substrate. Aspartate 401, histidine 405, aspartate 442, histidine 443, and histidine 460 together coordinate Mn(2+).

It belongs to the BPG-independent phosphoglycerate mutase family. Requires Mg(2+) as cofactor. The cofactor is Mn(2+).

It catalyses the reaction (2R)-2-phosphoglycerate = (2R)-3-phosphoglycerate. It functions in the pathway carbohydrate degradation; glycolysis; pyruvate from D-glyceraldehyde 3-phosphate: step 3/5. Its activity is regulated as follows. Activity is not affected by 2,3-bisphosphoglycerate. Catalyzes the interconversion of 2-phosphoglycerate and 3-phosphoglycerate. This Brugia malayi (Filarial nematode worm) protein is 2,3-bisphosphoglycerate-independent phosphoglycerate mutase.